A 372-amino-acid chain; its full sequence is UDP-N-acetylglucosamine--N-acetylmuramyl-(pentapeptide) pyrophosphoryl-undecaprenol N-acetylglucosamine transferase (372 aa).

UDP-N-acetyl-alpha-D-glucosamine is bound by residues 21–23 (TAG), Asn-135, Arg-172, Ser-206, and Gln-303.

Belongs to the glycosyltransferase 28 family. MurG subfamily.

It is found in the cell membrane. It carries out the reaction di-trans,octa-cis-undecaprenyl diphospho-N-acetyl-alpha-D-muramoyl-L-alanyl-D-glutamyl-meso-2,6-diaminopimeloyl-D-alanyl-D-alanine + UDP-N-acetyl-alpha-D-glucosamine = di-trans,octa-cis-undecaprenyl diphospho-[N-acetyl-alpha-D-glucosaminyl-(1-&gt;4)]-N-acetyl-alpha-D-muramoyl-L-alanyl-D-glutamyl-meso-2,6-diaminopimeloyl-D-alanyl-D-alanine + UDP + H(+). It participates in cell wall biogenesis; peptidoglycan biosynthesis. Functionally, cell wall formation. Catalyzes the transfer of a GlcNAc subunit on undecaprenyl-pyrophosphoryl-MurNAc-pentapeptide (lipid intermediate I) to form undecaprenyl-pyrophosphoryl-MurNAc-(pentapeptide)GlcNAc (lipid intermediate II). The polypeptide is UDP-N-acetylglucosamine--N-acetylmuramyl-(pentapeptide) pyrophosphoryl-undecaprenol N-acetylglucosamine transferase (Paenarthrobacter aurescens (strain TC1)).